Consider the following 565-residue polypeptide: Molybdenum cofactor biosynthesis protein 1 (565 aa).

Residues 3-367 (LLARHAIRLL…AVQRKKKQHA (365 aa)) are molybdenum cofactor biosynthesis protein A. The region spanning 64-276 (SFGRHHTYLR…LQIIRQRWPD (213 aa)) is the Radical SAM core domain. Residue arginine 73 coordinates GTP. 2 residues coordinate [4Fe-4S] cluster: cysteine 80 and cysteine 84. Tyrosine 86 contributes to the S-adenosyl-L-methionine binding site. Cysteine 87 lines the [4Fe-4S] cluster pocket. Residue arginine 123 participates in GTP binding. Position 127 (glycine 127) interacts with S-adenosyl-L-methionine. Threonine 154 is a binding site for GTP. Serine 178 contributes to the S-adenosyl-L-methionine binding site. Lysine 214 serves as a coordination point for GTP. Methionine 248 is a binding site for S-adenosyl-L-methionine. 2 residues coordinate [4Fe-4S] cluster: cysteine 311 and cysteine 314. A GTP-binding site is contributed by 316–318 (RLR). Position 328 (cysteine 328) interacts with [4Fe-4S] cluster. The For molybdenum cofactor biosynthesis protein C activity role is filled by aspartate 525.

It in the C-terminal section; belongs to the MoaC family. The protein in the N-terminal section; belongs to the radical SAM superfamily. MoaA family. Isoform Mocs1a and isoform Mocs1b probably form a heterooligomer. Requires [4Fe-4S] cluster as cofactor.

The catalysed reaction is GTP + AH2 + S-adenosyl-L-methionine = (8S)-3',8-cyclo-7,8-dihydroguanosine 5'-triphosphate + 5'-deoxyadenosine + L-methionine + A + H(+). It catalyses the reaction (8S)-3',8-cyclo-7,8-dihydroguanosine 5'-triphosphate = cyclic pyranopterin phosphate + diphosphate. It participates in cofactor biosynthesis; molybdopterin biosynthesis. Isoform Mocs1a and isoform Mocs1b probably form a complex that catalyzes the conversion of 5'-GTP to cyclic pyranopterin monophosphate (cPMP). Mocs1a catalyzes the cyclization of GTP to (8S)-3',8-cyclo-7,8-dihydroguanosine 5'-triphosphate and Mocs1b catalyzes the subsequent conversion of (8S)-3',8-cyclo-7,8-dihydroguanosine 5'-triphosphate to cPMP. In Drosophila melanogaster (Fruit fly), this protein is Molybdenum cofactor biosynthesis protein 1 (Mocs1).